We begin with the raw amino-acid sequence, 272 residues long: Dermonecrotic toxin SpeSicTox-betaIB2a (272 aa).

His5 is an active-site residue. Mg(2+)-binding residues include Glu25 and Asp27. His41 serves as the catalytic Nucleophile. 2 cysteine pairs are disulfide-bonded: Cys45-Cys51 and Cys47-Cys191. Residue Asp85 participates in Mg(2+) binding.

It belongs to the arthropod phospholipase D family. Class II subfamily. Mg(2+) serves as cofactor. As to expression, expressed by the venom gland.

It localises to the secreted. The catalysed reaction is an N-(acyl)-sphingosylphosphocholine = an N-(acyl)-sphingosyl-1,3-cyclic phosphate + choline. It carries out the reaction an N-(acyl)-sphingosylphosphoethanolamine = an N-(acyl)-sphingosyl-1,3-cyclic phosphate + ethanolamine. It catalyses the reaction a 1-acyl-sn-glycero-3-phosphocholine = a 1-acyl-sn-glycero-2,3-cyclic phosphate + choline. The enzyme catalyses a 1-acyl-sn-glycero-3-phosphoethanolamine = a 1-acyl-sn-glycero-2,3-cyclic phosphate + ethanolamine. Dermonecrotic toxins cleave the phosphodiester linkage between the phosphate and headgroup of certain phospholipids (sphingolipid and lysolipid substrates), forming an alcohol (often choline) and a cyclic phosphate. This toxin acts on sphingomyelin (SM). It may also act on ceramide phosphoethanolamine (CPE), lysophosphatidylcholine (LPC) and lysophosphatidylethanolamine (LPE), but not on lysophosphatidylserine (LPS), and lysophosphatidylglycerol (LPG). It acts by transphosphatidylation, releasing exclusively cyclic phosphate products as second products. Induces dermonecrosis, hemolysis, increased vascular permeability, edema, inflammatory response, and platelet aggregation. The polypeptide is Dermonecrotic toxin SpeSicTox-betaIB2a (Sicarius peruensis (Six-eyed sand spider)).